The primary structure comprises 332 residues: Solute carrier family 25 member 16 (332 aa).

Solcar repeat units follow at residues 34 to 120 (FYWL…YKTL), 128 to 216 (SGHV…LKSV), and 238 to 328 (LKTH…MKQF). 6 helical membrane-spanning segments follow: residues 37–57 (LRSF…VAPL), 88–108 (GFLG…PYGA), 134–154 (LMAG…LDMV), 191–211 (GLMP…FTFG), 244–264 (LLCG…FDVT), and 299–319 (GLYR…AVAF).

This sequence belongs to the mitochondrial carrier (TC 2.A.29) family.

Its subcellular location is the mitochondrion inner membrane. May be involved in the transport of coenzyme A in the mitochondrial matrix. Very little is known about the physiological function of this carrier. The polypeptide is Solute carrier family 25 member 16 (Homo sapiens (Human)).